Here is a 415-residue protein sequence, read N- to C-terminus: F-box protein At3g13820 (415 aa).

The 50-residue stretch at 1–50 folds into the F-box domain; the sequence is MTTMSNLPAEVLEEILSRTPVTSLRTMRSTCKKWNNLSKKKIIPEAARKQ. 2 disordered regions span residues 209–229 and 387–415; these read NDYD…EDDD and KQPK…KIIG. Residues 210–229 are compositionally biased toward acidic residues; sequence DYDDQEDEEEEDDEEYEDDD. Basic residues predominate over residues 403–415; that stretch reads NKNKKGRKIKIIG.

This is F-box protein At3g13820 from Arabidopsis thaliana (Mouse-ear cress).